The chain runs to 388 residues: MNLHEYQAKQLFAEYGLPVSTGYACDTPEEAAAAAEKIGGDMWVVKTQVHAGGRGKAGGVKLVKTIDEVKAFAANWLGKNLVTYQTDEKGQPVAKILVESCTDIANELYLGAVVDRASRKVVFMASTEGGVEIETVAEETPELIHKAEIDPLVGPQAYQARELGFKLGLNPVQMKQFVKIFMGLGKMFTDFDFALLEINPLVITDEGNLHCLDGKIGIDGNALYRQPKIREFHDPSQEDSREAHAASFELNYVALDGNVGCMVNGAGLAMGTMDIVNLHGGKPANFLDVGGGATKERVSEAFKIILSDDNVKAVLVNIFGGIVRCDMIAEGIIGAVKEVGVNVPVVVRLEGTNAELGREVLKNSGLDIIAAESLTDAAEKVVAAAEGK.

In terms of domain architecture, ATP-grasp spans 9–244 (KQLFAEYGLP…PSQEDSREAH (236 aa)). ATP contacts are provided by residues lysine 46, 53-55 (GRG), glutamate 99, threonine 102, and glutamate 107. Residues asparagine 199 and aspartate 213 each contribute to the Mg(2+) site. Residues asparagine 264 and 321 to 323 (GIV) contribute to the substrate site.

Belongs to the succinate/malate CoA ligase beta subunit family. As to quaternary structure, heterotetramer of two alpha and two beta subunits. Mg(2+) is required as a cofactor.

It carries out the reaction succinate + ATP + CoA = succinyl-CoA + ADP + phosphate. The catalysed reaction is GTP + succinate + CoA = succinyl-CoA + GDP + phosphate. It participates in carbohydrate metabolism; tricarboxylic acid cycle; succinate from succinyl-CoA (ligase route): step 1/1. Succinyl-CoA synthetase functions in the citric acid cycle (TCA), coupling the hydrolysis of succinyl-CoA to the synthesis of either ATP or GTP and thus represents the only step of substrate-level phosphorylation in the TCA. The beta subunit provides nucleotide specificity of the enzyme and binds the substrate succinate, while the binding sites for coenzyme A and phosphate are found in the alpha subunit. This chain is Succinate--CoA ligase [ADP-forming] subunit beta, found in Pseudoalteromonas translucida (strain TAC 125).